A 333-amino-acid polypeptide reads, in one-letter code: uncharacterized protein (333 aa).

This is an uncharacterized protein from Mycolicibacterium smegmatis (Mycobacterium smegmatis).